The primary structure comprises 101 residues: 2-amino-4-ketopentanoate thiolase alpha subunit (101 aa).

This sequence belongs to the OrtA family. In terms of assembly, heterodimer with OrtB.

The catalysed reaction is D-alanine + acetyl-CoA = (2R)-2-amino-4-oxopentanoate + CoA. Its function is as follows. Involved in the ornithine fermentation pathway. Catalyzes the thiolytic cleavage of 2-amino-4-ketopentanoate (AKP) with coenzyme A (CoA) to form acetyl-CoA and alanine. It is strictly specific for AKP. This Unknown prokaryotic organism protein is 2-amino-4-ketopentanoate thiolase alpha subunit.